A 473-amino-acid polypeptide reads, in one-letter code: Glutamate-1-semialdehyde 2,1-aminomutase, chloroplastic (473 aa).

The N-terminal 37 residues, 1-37, are a transit peptide targeting the chloroplast; sequence MSATLTGSGTALGFSCSSKISKRVSSSPSTRCSIKMS. An N6-(pyridoxal phosphate)lysine modification is found at K313.

The protein belongs to the class-III pyridoxal-phosphate-dependent aminotransferase family. HemL subfamily. In terms of assembly, homodimer. Pyridoxal 5'-phosphate is required as a cofactor.

Its subcellular location is the plastid. The protein localises to the chloroplast. It catalyses the reaction (S)-4-amino-5-oxopentanoate = 5-aminolevulinate. It functions in the pathway porphyrin-containing compound metabolism; protoporphyrin-IX biosynthesis; 5-aminolevulinate from L-glutamyl-tRNA(Glu): step 2/2. The protein operates within porphyrin-containing compound metabolism; chlorophyll biosynthesis. The polypeptide is Glutamate-1-semialdehyde 2,1-aminomutase, chloroplastic (GSA) (Brassica napus (Rape)).